The primary structure comprises 183 residues: Capsid protein (183 aa).

The segment at 143–183 (LPETTVIRRRGRSPRRRTPSPRRRRSQSPRRRRSQSREPQC) is disordered. The span at 149-176 (IRRRGRSPRRRTPSPRRRRSQSPRRRRS) shows a compositional bias: basic residues. Residues serine 155, serine 162, and serine 170 each carry the phosphoserine; by host modification. A 1; half-length repeat occupies 155–161 (SPRRRTP). The 3 X 8 AA repeats of S-P-R-R-R-[PR]-S-Q stretch occupies residues 155–177 (SPRRRTPSPRRRRSQSPRRRRSQ). The Bipartite nuclear localization signal motif lies at 158–175 (RRTPSPRRRRSQSPRRRR). Repeat copies occupy residues 162-169 (SPRRRRSQ) and 170-177 (SPRRRRSQ). An RNA binding region spans residues 177-183 (QSREPQC).

It belongs to the orthohepadnavirus core antigen family. As to quaternary structure, homodimerizes, then multimerizes. Interacts with cytosol exposed regions of viral L glycoprotein present in the reticulum-to-Golgi compartment. Interacts with human FLNB. Phosphorylated form interacts with host importin alpha; this interaction depends on the exposure of the NLS, which itself depends upon genome maturation and/or phosphorylation of the capsid protein. Interacts with host NUP153. Phosphorylated by host SRPK1, SRPK2, and maybe protein kinase C or GAPDH. Phosphorylation is critical for pregenomic RNA packaging. Protein kinase C phosphorylation is stimulated by HBx protein and may play a role in transport of the viral genome to the nucleus at the late step during the viral replication cycle.

It localises to the virion. The protein resides in the host cytoplasm. Its function is as follows. Self assembles to form an icosahedral capsid. Most capsids appear to be large particles with an icosahedral symmetry of T=4 and consist of 240 copies of capsid protein, though a fraction forms smaller T=3 particles consisting of 180 capsid proteins. Entering capsids are transported along microtubules to the nucleus. Phosphorylation of the capsid is thought to induce exposure of nuclear localization signal in the C-terminal portion of the capsid protein that allows binding to the nuclear pore complex via the importin (karyopherin-) alpha and beta. Capsids are imported in intact form through the nuclear pore into the nuclear basket, where it probably binds NUP153. Only capsids that contain the mature viral genome can release the viral DNA and capsid protein into the nucleoplasm. Immature capsids get stuck in the basket. Capsids encapsulate the pre-genomic RNA and the P protein. Pre-genomic RNA is reverse-transcribed into DNA while the capsid is still in the cytoplasm. The capsid can then either be directed to the nucleus, providing more genomes for transcription, or bud through the endoplasmic reticulum to provide new virions. In Hepatitis B virus genotype B1 (isolate Japan/Ry30/2002) (HBV-B), this protein is Capsid protein.